Here is a 177-residue protein sequence, read N- to C-terminus: uncharacterized protein (177 aa).

To Synechocystis PCC 6803 slr1290 and sll0925.

This is an uncharacterized protein from Synechocystis sp. (strain ATCC 27184 / PCC 6803 / Kazusa).